A 244-amino-acid chain; its full sequence is MSSYIMLVLLLLDIYSSCVDGYLSSPHVGQDPPYLAQQKSVMSSPVALTASSASPVVTDNYVSKCPSGGLCSKLPADCIICALHHNCSYGRPHNYTCRPRAGVHCVSDQGERQQNFTLSLLCRFCFQLDASQYRCSNSSDCMTVSCPRRRYNASCEVLEHVHCLGKRVFQKRLFCNWTGGYKWSTALALSITLGGFGADRFYLGQWREGLGKLFSFGGLGIWTLIDVLLIGVGYVGPADGSLYI.

The N-terminal stretch at 1–21 (MSSYIMLVLLLLDIYSSCVDG) is a signal peptide. Topologically, residues 22–176 (YLSSPHVGQD…RVFQKRLFCN (155 aa)) are extracellular. 6 N-linked (GlcNAc...) asparagine glycosylation sites follow: asparagine 86, asparagine 94, asparagine 115, asparagine 137, asparagine 152, and asparagine 176. Residues 177–197 (WTGGYKWSTALALSITLGGFG) form a helical membrane-spanning segment. One can recognise a TM2 domain in the interval 180-227 (GYKWSTALALSITLGGFGADRFYLGQWREGLGKLFSFGGLGIWTLIDV). The Cytoplasmic segment spans residues 198–212 (ADRFYLGQWREGLGK). A helical transmembrane segment spans residues 213–233 (LFSFGGLGIWTLIDVLLIGVG). Residues 234 to 244 (YVGPADGSLYI) lie on the Extracellular side of the membrane.

This sequence belongs to the TM2 family.

It is found in the membrane. The sequence is that of TM2 domain-containing protein 3 (tm2d3) from Danio rerio (Zebrafish).